A 40-amino-acid polypeptide reads, in one-letter code: Potassium channel toxin alpha-KTx 12.3 (40 aa).

Disulfide bonds link Cys2-Cys5, Cys10-Cys31, Cys16-Cys36, and Cys20-Cys38.

Expressed by the venom gland.

The protein localises to the secreted. Inhibits high conductance calcium-activated potassium channels (KCNMA). Inhibits Shaker B potassium channels. This is Potassium channel toxin alpha-KTx 12.3 from Tityus costatus (Brazilian scorpion).